Consider the following 412-residue polypeptide: MSGKIMAINAGSSSLKFQLFSMLNEQTGQHHEQVLCQGLIERIGMDDAIFNLRVGDVQWRETLPIADCRQGAEHLLRALIEHNVIDSLDEIIGVGHRVAHGGETFADSVLITPQVLDKIEQLGTLAPLHNPVNALGIRVFQLALPHASAVAVFDTAFHQTLSQTSFLYPLPWRYYEELGIRRYGFHGTSHKYVSAVCAERMGQPLAALRIVSCHLGNGSSICAIGHGKSVNTSMGFTPQAGVMMGTRSGDIDPSILPFIQQTEGKSAVEINHLINNQSGLLGISGISHDYRDVEQAADNGNRRAALALELFAERIRAVIGSYIVQLGGIDALIFTGGIGENSRSARQQICRELTFLGIELDQEKNIRNQFFIQQDTAPVQIAIVNTNEELMIARDVLRVALNLPVQPALATQ.

The protein belongs to the acetokinase family. PduW subfamily.

It is found in the cytoplasm. The enzyme catalyses propanoate + ATP = propanoyl phosphate + ADP. The protein operates within polyol metabolism; 1,2-propanediol degradation. Its function is as follows. Works with phosphate acetyltransferase (pta) to capture exogenous propionate and regenerate propionyl-CoA during degradation of 1,2-propanediol (1,2-PD). The polypeptide is Propionate kinase (Yersinia enterocolitica serotype O:8 / biotype 1B (strain NCTC 13174 / 8081)).